Here is a 106-residue protein sequence, read N- to C-terminus: uncharacterized protein (106 aa).

Helical transmembrane passes span 46-68 (LLQE…ILAF) and 73-92 (AVFI…LIAA).

The protein resides in the cell membrane. This is an uncharacterized protein from Bacillus subtilis (strain 168).